The sequence spans 511 residues: Cytochrome P450 26B1 (511 aa).

Cysteine 440 is a binding site for heme.

The protein belongs to the cytochrome P450 family. Requires heme as cofactor.

The protein localises to the endoplasmic reticulum membrane. Its subcellular location is the microsome membrane. It catalyses the reaction all-trans-retinoate + reduced [NADPH--hemoprotein reductase] + O2 = all-trans-4-hydroxyretinoate + oxidized [NADPH--hemoprotein reductase] + H2O + H(+). It carries out the reaction all-trans-retinoate + reduced [NADPH--hemoprotein reductase] + O2 = all-trans-18-hydroxyretinoate + oxidized [NADPH--hemoprotein reductase] + H2O + H(+). Functionally, a cytochrome P450 monooxygenase involved in the metabolism of retinoates (RAs), the active metabolites of vitamin A, and critical signaling molecules in animals. RAs exist as at least four different isomers: all-trans-RA (atRA), 9-cis-RA, 13-cis-RA, and 9,13-dicis-RA, where atRA is considered to be the biologically active isomer, although 9-cis-RA and 13-cis-RA also have activity. Catalyzes the hydroxylation of atRA primarily at C-4 and C-18, thereby contributing to the regulation of atRA homeostasis and signaling. Hydroxylation of atRA limits its biological activity and initiates a degradative process leading to its eventual elimination. Involved in the convertion of atRA to all-trans-4-oxo-RA. Can oxidize all-trans-13,14-dihydroretinoate (DRA) to metabolites which could include all-trans-4-oxo-DRA, all-trans-4-hydroxy-DRA, all-trans-5,8-epoxy-DRA, and all-trans-18-hydroxy-DRA. This is Cytochrome P450 26B1 (cyp26b1) from Xenopus tropicalis (Western clawed frog).